A 2145-amino-acid chain; its full sequence is Adenylate cyclase (2145 aa).

4 disordered regions span residues 1 to 115 (MPRN…RMSD), 127 to 236 (DPAG…SGAR), 266 to 307 (GKEH…PVPK), and 329 to 547 (VRDI…GPTD). Composition is skewed to low complexity over residues 7 to 23 (SSRF…SARS), 35 to 68 (PSAS…APSR), and 89 to 107 (SPTS…SSNS). 2 stretches are compositionally biased toward polar residues: residues 134 to 148 (SRTQ…SLSQ) and 159 to 205 (PASS…TESP). Residues 217–234 (SIASITTTASSQGSRASG) show a composition bias toward low complexity. A compositionally biased stretch (basic residues) spans 269-281 (HRSHSYSHARPHR). The segment covering 343 to 357 (NDSSQQNNPPKTSGS) has biased composition (polar residues). Residues 377 to 403 (KSNEDPRSLRPTVSREDSTISVPKDRN) are compositionally biased toward basic and acidic residues. A compositionally biased stretch (polar residues) spans 404-441 (GSSTMYGTRSRAQSPAPSTTGSYWGHKSGSTDGQTSPG). Composition is skewed to basic and acidic residues over residues 454–466 (RLKE…DLKK) and 495–511 (ADGK…RPDL). Residues 637–727 (HNYCIRVFRA…IEDIGREDNS (91 aa)) enclose the Ras-associating domain. LRR repeat units follow at residues 779 to 800 (EIIS…FISV), 803 to 824 (NLRD…FGYA), 826 to 847 (RLTM…ALHN), 850 to 871 (GLLK…FEAF), 873 to 894 (VLRT…LAKL), 896 to 917 (NLVD…VGQM), 919 to 941 (SLER…FKNL), 943 to 964 (SLRE…SQLP), 965 to 986 (KLEI…FERV), 987 to 1006 (RSIK…APVP), 1007 to 1028 (TLKA…FHNM), 1030 to 1051 (NLER…IGNL), 1053 to 1074 (RLEY…IGCL), 1076 to 1097 (ELKR…LWWA), and 1099 to 1120 (KLDY…ASRA). The interval 1114–1226 (PKPASRAPHP…SSRKDSSHTQ (113 aa)) is disordered. 2 stretches are compositionally biased toward low complexity: residues 1160-1179 (RPSQ…VPGG) and 1201-1217 (SRST…PTAS). 6 LRR repeats span residues 1235–1255 (SLRY…DQLC), 1259–1280 (NLRV…SIKS), 1283–1304 (QLVE…DLEE), 1307–1328 (MLQT…ISRA), 1330–1352 (KLTV…PYDW), and 1359–1380 (NLRY…SVPT). Residues 1432–1709 (PYGMADTLGS…NKMTVQMLGV (278 aa)) enclose the PPM-type phosphatase domain. The tract at residues 1718–1760 (RSRQHKGQSMPVYASLQDDGGSSTGMRRARKARDGPLDSTLGR) is disordered. Residues 1773-1910 (AIVFTDIKNS…PMVNKASRIS (138 aa)) enclose the Guanylate cyclase domain. The Mg(2+) site is built by D1778 and D1821.

Belongs to the adenylyl cyclase class-3 family. It depends on Mg(2+) as a cofactor.

The catalysed reaction is ATP = 3',5'-cyclic AMP + diphosphate. Plays essential roles in regulation of cellular metabolism by catalyzing the synthesis of a second messenger, cAMP. This chain is Adenylate cyclase, found in Podospora anserina (Pleurage anserina).